Here is a 470-residue protein sequence, read N- to C-terminus: Neuraminidase (470 aa).

Residues 1 to 14 (MNPNQKIITIGSVS) lie on the Intravirion side of the membrane. The interval 11–32 (GSVSLGLVVLNILLHIVSITIT) is involved in apical transport and lipid raft association. A helical transmembrane segment spans residues 15–35 (LGLVVLNILLHIVSITITVLV). Positions 32-86 (TVLVLPGNGNNGSCNETVIREYNETVRIEKITQWHNTNVIEYIERPESDHFMNNT) are hypervariable stalk region. The Virion surface segment spans residues 36 to 470 (LPGNGNNGSC…AILPFDIDKM (435 aa)). Residues N42, N46, N54, and N84 are each glycosylated (N-linked (GlcNAc...) asparagine; by host). The segment at 89–470 (LCDAKGFAPF…AILPFDIDKM (382 aa)) is head of neuraminidase. 8 disulfide bridges follow: C90/C417, C122/C127, C182/C229, C231/C236, C277/C290, C279/C288, C316/C335, and C421/C446. R116 serves as a coordination point for substrate. N-linked (GlcNAc...) asparagine; by host glycosylation is present at N144. D149 (proton donor/acceptor) is an active-site residue. Substrate is bound at residue R150. Residue 275–276 (EE) coordinates substrate. R291 is a substrate binding site. D292 contacts Ca(2+). N293 carries an N-linked (GlcNAc...) asparagine; by host glycan. Ca(2+) is bound by residues G296 and D322. A substrate-binding site is contributed by R368. The N-linked (GlcNAc...) asparagine; by host glycan is linked to N398. Residue Y402 is the Nucleophile of the active site.

Belongs to the glycosyl hydrolase 34 family. Homotetramer. It depends on Ca(2+) as a cofactor. In terms of processing, N-glycosylated.

Its subcellular location is the virion membrane. It localises to the host apical cell membrane. It carries out the reaction Hydrolysis of alpha-(2-&gt;3)-, alpha-(2-&gt;6)-, alpha-(2-&gt;8)- glycosidic linkages of terminal sialic acid residues in oligosaccharides, glycoproteins, glycolipids, colominic acid and synthetic substrates.. Inhibited by the neuraminidase inhibitors zanamivir (Relenza) and oseltamivir (Tamiflu). These drugs interfere with the release of progeny virus from infected cells and are effective against all influenza strains. Resistance to neuraminidase inhibitors is quite rare. Functionally, catalyzes the removal of terminal sialic acid residues from viral and cellular glycoconjugates. Cleaves off the terminal sialic acids on the glycosylated HA during virus budding to facilitate virus release. Additionally helps virus spread through the circulation by further removing sialic acids from the cell surface. These cleavages prevent self-aggregation and ensure the efficient spread of the progeny virus from cell to cell. Otherwise, infection would be limited to one round of replication. Described as a receptor-destroying enzyme because it cleaves a terminal sialic acid from the cellular receptors. May facilitate viral invasion of the upper airways by cleaving the sialic acid moieties on the mucin of the airway epithelial cells. Likely to plays a role in the budding process through its association with lipid rafts during intracellular transport. May additionally display a raft-association independent effect on budding. Plays a role in the determination of host range restriction on replication and virulence. Sialidase activity in late endosome/lysosome traffic seems to enhance virus replication. This is Neuraminidase from Influenza A virus (strain A/Guinea fowl/New York/4-3587/1984 H3N8).